The chain runs to 546 residues: 5'-nucleotidase domain-containing protein 3 (546 aa).

The active-site Nucleophile is the D100. Residues D100 and D102 each coordinate Mg(2+). The active-site Proton donor is the D102. 249–257 (KDSIRDVHI) is a substrate binding site. D387 provides a ligand contact to Mg(2+).

This sequence belongs to the 5'(3')-deoxyribonucleotidase family. Mg(2+) is required as a cofactor.

This chain is 5'-nucleotidase domain-containing protein 3 (Nt5dc3), found in Mus musculus (Mouse).